Reading from the N-terminus, the 46-residue chain is uncharacterized protein (46 aa).

This is an uncharacterized protein from Escherichia coli (strain K12).